The primary structure comprises 262 residues: Snake venom serine protease catroxase-1 (262 aa).

An N-terminal signal peptide occupies residues 1-18 (MVLIRVLANLLILQLSYA). The propeptide occupies 19–24 (QKSSEP). A Peptidase S1 domain is found at 25 to 250 (IIGGDECNRN…HLDWIQSIIA (226 aa)). Intrachain disulfides connect cysteine 31/cysteine 162, cysteine 49/cysteine 65, cysteine 97/cysteine 257, cysteine 141/cysteine 211, cysteine 173/cysteine 190, and cysteine 201/cysteine 226. Histidine 64 serves as the catalytic Charge relay system. N-linked (GlcNAc...) asparagine glycosylation occurs at asparagine 102. The active-site Charge relay system is the aspartate 109. N-linked (GlcNAc...) asparagine glycosylation is present at asparagine 169. The active-site Charge relay system is the serine 205.

The protein belongs to the peptidase S1 family. Snake venom subfamily. In terms of assembly, monomer. Expressed by the venom gland.

The protein resides in the secreted. In terms of biological role, snake venom serine protease that may act in the hemostasis system of the prey. This chain is Snake venom serine protease catroxase-1, found in Crotalus atrox (Western diamondback rattlesnake).